Reading from the N-terminus, the 465-residue chain is MTISQHRFRSNANASIISMLQRFSDILIIFLGIYFSCFINDYFFNLHYVLMALVALVVFQMIGGITDFYRSWRGVEFSVELILILKNWSLSFLLTLGFVTLFSDFDLTFRTFIFWYLAVCAGFVVTRPLIRALAGFFRRIGYNKRRVAFAGSLPAGISLLETFRKQPWLGFEVKGIYEDSFSGTYDLELYAGKISDLINEARKGTIDRIYIAMHMRDEVAIKNMVSQLTDTTCSVLYIPDVFTFNILQSRTEEINGVPVVPLFDSPLNGINMVFKRLEDIIVSSLILILISPILLVIATAVKTTSKGPVIFRQVRYGMDGKPIKVWKFRSMTVMENDDKVIQATKNDIRVTKVGKFLRSTSLDELPQFFNVLFGQMSVVGPRPHAVSHNEQYRSLIQGYMLRHKVKPGITGLAQINGWRGETDTLEKMEKRIEYDLLYIRGWSIWLDLKIIFLTVFKGFINKSAY.

5 consecutive transmembrane segments (helical) span residues 23 to 43 (FSDILIIFLGIYFSCFINDYF), 46 to 66 (LHYVLMALVALVVFQMIGGIT), 82 to 102 (ILILKNWSLSFLLTLGFVTLF), 105 to 125 (FDLTFRTFIFWYLAVCAGFVV), and 280 to 300 (IIVSSLILILISPILLVIATA).

It belongs to the bacterial sugar transferase family.

It localises to the cell inner membrane. The catalysed reaction is di-trans,octa-cis-undecaprenyl phosphate + UDP-alpha-D-glucose = alpha-D-glucosyl di-trans,octa-cis-undecaprenyl diphosphate + UMP. Its pathway is capsule biogenesis; capsule polysaccharide biosynthesis. Is likely the initiating enzyme for the K2 capsular polysaccharide synthesis. Catalyzes the transfer of the glucose-1-phosphate moiety from UDP-Glc onto the carrier lipid undecaprenyl phosphate (C55-P), forming a phosphoanhydride bond yielding to glucosyl-pyrophosphoryl-undecaprenol (Glc-PP-C55). The sequence is that of UDP-glucose:undecaprenyl-phosphate glucose-1-phosphate transferase from Klebsiella pneumoniae.